Reading from the N-terminus, the 730-residue chain is GTPase-activating protein GYP7 (730 aa).

The region spanning 434–619 (VQEDKERDDF…RLWEVLWTDY (186 aa)) is the Rab-GAP TBC domain.

Most effectively accelerate the intrinsic GTPase activity of YPT7. It is also active, but to a lesser extent, on YPT31, YPT32 and YPT1. YPT6 and SEC4. In Yarrowia lipolytica (strain CLIB 122 / E 150) (Yeast), this protein is GTPase-activating protein GYP7 (GYP7).